A 374-amino-acid chain; its full sequence is tRNA (guanine(26)-N(2))-dimethyltransferase (374 aa).

The region spanning 4 to 371 is the Trm1 methyltransferase domain; that stretch reads IEIREGKASL…KEIDEIVNCI (368 aa). Residues Arg-44, Arg-69, Asp-87, Asp-113, and Ala-114 each coordinate S-adenosyl-L-methionine. Cys-244, Cys-247, Cys-261, and Cys-264 together coordinate Zn(2+).

This sequence belongs to the class I-like SAM-binding methyltransferase superfamily. Trm1 family.

It carries out the reaction guanosine(26) in tRNA + 2 S-adenosyl-L-methionine = N(2)-dimethylguanosine(26) in tRNA + 2 S-adenosyl-L-homocysteine + 2 H(+). Dimethylates a single guanine residue at position 26 of a number of tRNAs using S-adenosyl-L-methionine as donor of the methyl groups. The sequence is that of tRNA (guanine(26)-N(2))-dimethyltransferase from Sulfurisphaera tokodaii (strain DSM 16993 / JCM 10545 / NBRC 100140 / 7) (Sulfolobus tokodaii).